The chain runs to 276 residues: Type II pantothenate kinase (276 aa).

8–15 (DAGGTLTK) provides a ligand contact to ATP. Glu76 (proton acceptor) is an active-site residue. ATP is bound by residues Thr105, 127 to 131 (GGTIM), Phe143, and Ser230.

This sequence belongs to the type II pantothenate kinase family. Homodimer.

The protein localises to the cytoplasm. The catalysed reaction is (R)-pantothenate + ATP = (R)-4'-phosphopantothenate + ADP + H(+). It participates in cofactor biosynthesis; coenzyme A biosynthesis; CoA from (R)-pantothenate: step 1/5. Functionally, catalyzes the phosphorylation of pantothenate (Pan), the first step in CoA biosynthesis. The protein is Type II pantothenate kinase of Bacillus cereus (strain AH820).